A 332-amino-acid chain; its full sequence is Fructose-1,6-bisphosphatase class 1 (332 aa).

Mg(2+) contacts are provided by glutamate 89, aspartate 110, leucine 112, and aspartate 113. Substrate-binding positions include 113–116, asparagine 206, tyrosine 239, 257–259, and lysine 269; these read DGSS and YLY. Glutamate 275 is a Mg(2+) binding site.

This sequence belongs to the FBPase class 1 family. Homotetramer. It depends on Mg(2+) as a cofactor.

It is found in the cytoplasm. The enzyme catalyses beta-D-fructose 1,6-bisphosphate + H2O = beta-D-fructose 6-phosphate + phosphate. It participates in carbohydrate biosynthesis; gluconeogenesis. This is Fructose-1,6-bisphosphatase class 1 from Salmonella arizonae (strain ATCC BAA-731 / CDC346-86 / RSK2980).